We begin with the raw amino-acid sequence, 561 residues long: Acylcarnitine hydrolase (561 aa).

A signal peptide spans 1–26 (MTRNQLHNWLNAGFFGLLLLLIHVQG). Cys97 and Cys125 are oxidised to a cystine. Catalysis depends on Ser230, which acts as the Acyl-ester intermediate. Cys282 and Cys293 form a disulfide bridge. Catalysis depends on charge relay system residues Glu347 and His459. The Prevents secretion from ER motif lies at 558–561 (HREL).

Belongs to the type-B carboxylesterase/lipase family. As to expression, detected in liver (at protein level).

The protein localises to the microsome. Its subcellular location is the endoplasmic reticulum. It carries out the reaction an O-acyl-(R)-carnitine + H2O = (R)-carnitine + a fatty acid + H(+). The enzyme catalyses all-trans-retinyl hexadecanoate + H2O = all-trans-retinol + hexadecanoate + H(+). Its function is as follows. Hydrolase with high activity towards palmitoylcarnitine. Is also active with p-nitrophenylacetate and alpha-naphthylacetate. May also hydrolyze retinyl esters. This Mus musculus (Mouse) protein is Acylcarnitine hydrolase.